We begin with the raw amino-acid sequence, 579 residues long: 6-deoxy-6-sulfo-D-gluconate dehydratase (579 aa).

3 residues coordinate [4Fe-4S] cluster: C59, C127, and C200.

It belongs to the IlvD/Edd family. In terms of assembly, homodimer. [4Fe-4S] cluster is required as a cofactor.

The catalysed reaction is 6-deoxy-6-sulfo-D-gluconate = 2-dehydro-3,6-dideoxy-6-sulfo-D-gluconate + H2O. Catalyzes the dehydration of 6-deoxy-6-sulfo-D-gluconate to 2-dehydro-3,6-dideoxy-6-sulfo-D-gluconate. Is involved in a degradation pathway of sulfoquinovose (SQ) that allows P.putida SQ1 to use SQ as the sole carbon and energy source for growth. The protein is 6-deoxy-6-sulfo-D-gluconate dehydratase of Pseudomonas putida (Arthrobacter siderocapsulatus).